Reading from the N-terminus, the 457-residue chain is Phosphomethylpyrimidine synthase (457 aa).

Substrate is bound by residues Asn80, Met109, Tyr139, His175, Ser195–Gly197, Asp236–Arg239, and Glu275. A Zn(2+)-binding site is contributed by His279. Tyr302 contributes to the substrate binding site. His343 lines the Zn(2+) pocket. [4Fe-4S] cluster is bound by residues Cys423, Cys426, and Cys431.

This sequence belongs to the ThiC family. Requires [4Fe-4S] cluster as cofactor.

It catalyses the reaction 5-amino-1-(5-phospho-beta-D-ribosyl)imidazole + S-adenosyl-L-methionine = 4-amino-2-methyl-5-(phosphooxymethyl)pyrimidine + CO + 5'-deoxyadenosine + formate + L-methionine + 3 H(+). The protein operates within cofactor biosynthesis; thiamine diphosphate biosynthesis. Functionally, catalyzes the synthesis of the hydroxymethylpyrimidine phosphate (HMP-P) moiety of thiamine from aminoimidazole ribotide (AIR) in a radical S-adenosyl-L-methionine (SAM)-dependent reaction. In Nostoc punctiforme (strain ATCC 29133 / PCC 73102), this protein is Phosphomethylpyrimidine synthase.